The following is a 214-amino-acid chain: NADH-quinone oxidoreductase subunit C (214 aa).

It belongs to the complex I 30 kDa subunit family. In terms of assembly, NDH-1 is composed of 14 different subunits. Subunits NuoB, C, D, E, F, and G constitute the peripheral sector of the complex.

Its subcellular location is the cell inner membrane. The catalysed reaction is a quinone + NADH + 5 H(+)(in) = a quinol + NAD(+) + 4 H(+)(out). In terms of biological role, NDH-1 shuttles electrons from NADH, via FMN and iron-sulfur (Fe-S) centers, to quinones in the respiratory chain. The immediate electron acceptor for the enzyme in this species is believed to be ubiquinone. Couples the redox reaction to proton translocation (for every two electrons transferred, four hydrogen ions are translocated across the cytoplasmic membrane), and thus conserves the redox energy in a proton gradient. In Caulobacter sp. (strain K31), this protein is NADH-quinone oxidoreductase subunit C.